The primary structure comprises 391 residues: Small ribosomal subunit protein bS1 (391 aa).

S1 motif domains lie at 16 to 90 (GDKV…LSRR), 108 to 173 (NEII…LSRK), 194 to 262 (GDVI…LSIK), and 279 to 348 (NDVI…LSIK).

The protein belongs to the bacterial ribosomal protein bS1 family.

In terms of biological role, binds mRNA; thus facilitating recognition of the initiation point. It is needed to translate mRNA with a short Shine-Dalgarno (SD) purine-rich sequence. This is Small ribosomal subunit protein bS1 (rpsA) from Staphylococcus aureus (strain N315).